A 541-amino-acid polypeptide reads, in one-letter code: MAKAVTSSKGAEKSEKKKPAARSGVKKDASKSKDASKSQVNVKISSAPARSAAKDTPVKKEERAKGTVGEIKQVIGAVVDVQFEGALPNILNALETENLGNRLVLEVAQHLGENTVRTIAMDTTDGLMRGQKVVDTGAQISVPVGEATLGRIMNVIGEPVDNVGPIASTKTRSIHQEAPEYVEQSTVSEILVTGIKVVDLLAPYSKGGKIGLFGGAGVGKTVLIMELINNIAKAHGGYSVFAGVGERTREGNDLYYEMIESGVNVNPKENNGSTEGSKCALVYGQMNEPPGARARVALSGLTIAESFRDEGQDVLFFVDNIFRFTQAGAEVSALLGRIPSAVGYQPTLATDMGALQERITSTKIGSITSVQAIYVPADDLTDPAPATSFAHLDATTVLSRSIAEKGIYPAVDPLDSFSRMLDPLIVGEEHYTVACQVQTILQRYRALQDIIAILGMDELSEDDKLLVGRARKIERFLSQPFHVAEAFTGSPGKLVSLEDTIKGFKGLCAGDYDDLPEAAFYMVGSIDEALEKGKRLMAEAS.

Residues Met1–Lys65 are disordered. Basic and acidic residues-rich tracts occupy residues Val25 to Ser36 and Ala52 to Lys65. An ATP-binding site is contributed by Gly214–Thr221.

It belongs to the ATPase alpha/beta chains family. F-type ATPases have 2 components, CF(1) - the catalytic core - and CF(0) - the membrane proton channel. CF(1) has five subunits: alpha(3), beta(3), gamma(1), delta(1), epsilon(1). CF(0) has three main subunits: a(1), b(2) and c(9-12). The alpha and beta chains form an alternating ring which encloses part of the gamma chain. CF(1) is attached to CF(0) by a central stalk formed by the gamma and epsilon chains, while a peripheral stalk is formed by the delta and b chains.

It localises to the cell inner membrane. It carries out the reaction ATP + H2O + 4 H(+)(in) = ADP + phosphate + 5 H(+)(out). In terms of biological role, produces ATP from ADP in the presence of a proton gradient across the membrane. The catalytic sites are hosted primarily by the beta subunits. This is ATP synthase subunit beta from Bartonella tribocorum (strain CIP 105476 / IBS 506).